The chain runs to 85 residues: Transcriptional repressor protein KorC (85 aa).

A DNA-binding region (H-T-H motif) is located at residues 28–47 (EVLRLAGLTGGKAAKVLGLG).

Functionally, acts with KorA as corepressor in the control of the kilC and kilE operons. In Escherichia coli, this protein is Transcriptional repressor protein KorC (korC).